The primary structure comprises 259 residues: Borneol dehydrogenase, mitochondrial (259 aa).

A mitochondrion-targeting transit peptide spans 1–30 (MASTVLRRLEGKVALITGAASGIGESAARL). Residues 21–23 (SGI), D42, 63–64 (DV), and 90–92 (NAG) each bind NAD(+). The active-site Proton donor is the S144. Substrate is bound by residues S144 and Y157. Positions 157, 161, and 192 each coordinate NAD(+). The Proton acceptor role is filled by Y157. Catalysis depends on K161, which acts as the Proton donor/acceptor.

It belongs to the short-chain dehydrogenases/reductases (SDR) family. As to expression, specifically expressed in glandular trichomes of mature flowers.

The protein resides in the mitochondrion. It catalyses the reaction borneol + NAD(+) = camphor + NADH + H(+). It functions in the pathway secondary metabolite biosynthesis; terpenoid biosynthesis. Its function is as follows. Involved in the biosynthesis of monoterpenes natural products related to camphor. Catalyzes the conversion of borneol into camphor. The protein is Borneol dehydrogenase, mitochondrial of Lavandula x intermedia (Lavandin).